A 422-amino-acid polypeptide reads, in one-letter code: Telomerase-associated protein of 50 kDa (422 aa).

As to quaternary structure, component of the telomerase holoenzyme complex, composed of the catalytic core (the catalytic subunit TERT, the telomerase RNA template component TER and TAP65/p65), which is associated with two heterotrimeric subcomplexes: (i) the replication protein A (RPA)-related subcomplex, composed of TEB1, RPA2/TEB2 and RPA3/TEB3 and (ii) the CST-like subcomplex, composed of TAP75/p75, TAP45/p45 and TAP19/p19. TEB1 and the CST-like subcomplex are tethered to the catalytic core by TAP50/p50.

The protein resides in the chromosome. The protein localises to the telomere. In terms of biological role, tethering component of the holoenzyme telomerase ribonucleoprotein (RNP) complex. Telomerase is an essential ribonucleoprotein enzyme that copies new telomeric repeats onto chromosome ends by repetitively synthesizing the short telomere-repeat sequence 5'-TTGGGG-3' using an RNA template component TER. In the telomerase holoenzyme complex, acts as a hub that anchors the two heterotrimeric subcomplexes with the catalytic core. The chain is Telomerase-associated protein of 50 kDa from Tetrahymena thermophila (strain SB210).